A 1434-amino-acid chain; its full sequence is Probable ATP-dependent RNA helicase spindle-E (1434 aa).

The 170-residue stretch at 126–295 (INAINENPVV…FANESSAPPV (170 aa)) folds into the Helicase ATP-binding domain. An ATP-binding site is contributed by 139 to 146 (GETGCGKT). A DEAH box motif is present at residues 241-244 (DEVH). The 172-residue stretch at 356 to 527 (TGKSYNQSLR…NCVLKAKELK (172 aa)) folds into the Helicase C-terminal domain. Residues 936 to 999 (AGAITKGLML…RLMSQDLLRH (64 aa)) enclose the Tudor domain.

This sequence belongs to the DEAD box helicase family. DEAH subfamily.

The protein resides in the cytoplasm. The catalysed reaction is ATP + H2O = ADP + phosphate + H(+). Functionally, probable ATP-binding RNA helicase which plays a central role during spermatogenesis and oogenesis by repressing transposable elements and preventing their mobilization, which is essential for the germline integrity. Acts via the piRNA metabolic process, which mediates the repression of transposable elements during meiosis by forming complexes composed of piRNAs and Piwi and govern the methylation and subsequent repression of transposons. Involved in the repression of LTR retrotransposon copia. Also involved in telomere regulation by repressing specialized telomeric retroelements HeT-A, TAHRE, and TART; Drosophila telomeres being maintained by transposition of specialized telomeric retroelements. Involved in telomeric trans-silencing, a repression mechanism by which a transposon or a transgene inserted in subtelomeric heterochromatin has the capacity to repress in trans in the female germline, a homologous transposon, or transgene located in euchromatin. Involved in the repression of testis-expressed Stellate genes by the homologous Su(Ste) repeats. Required for anteroposterior and dorsoventral axis formation during oogenesis. The chain is Probable ATP-dependent RNA helicase spindle-E (spn-E) from Drosophila persimilis (Fruit fly).